A 428-amino-acid polypeptide reads, in one-letter code: UPF0597 protein BF3560 (428 aa).

Belongs to the UPF0597 family.

This Bacteroides fragilis (strain ATCC 25285 / DSM 2151 / CCUG 4856 / JCM 11019 / LMG 10263 / NCTC 9343 / Onslow / VPI 2553 / EN-2) protein is UPF0597 protein BF3560.